The primary structure comprises 279 residues: S-methyl-5'-thioadenosine phosphorylase (279 aa).

Residues serine 13, 55–56 (RH), and 88–89 (TA) contribute to the phosphate site. A substrate-binding site is contributed by methionine 191. Residue threonine 192 participates in phosphate binding. 215–217 (DYD) provides a ligand contact to substrate.

Belongs to the PNP/MTAP phosphorylase family. MTAP subfamily. In terms of assembly, homotrimer.

It is found in the cytoplasm. Its subcellular location is the nucleus. The catalysed reaction is S-methyl-5'-thioadenosine + phosphate = 5-(methylsulfanyl)-alpha-D-ribose 1-phosphate + adenine. It functions in the pathway amino-acid biosynthesis; L-methionine biosynthesis via salvage pathway; S-methyl-5-thio-alpha-D-ribose 1-phosphate from S-methyl-5'-thioadenosine (phosphorylase route): step 1/1. Catalyzes the reversible phosphorylation of S-methyl-5'-thioadenosine (MTA) to adenine and 5-methylthioribose-1-phosphate. Involved in the breakdown of MTA, a major by-product of polyamine biosynthesis. Responsible for the first step in the methionine salvage pathway after MTA has been generated from S-adenosylmethionine. Has broad substrate specificity with 6-aminopurine nucleosides as preferred substrates. The protein is S-methyl-5'-thioadenosine phosphorylase of Aedes aegypti (Yellowfever mosquito).